The chain runs to 490 residues: ATP synthase subunit beta, chloroplastic (490 aa).

170–177 (GGAGVGKT) serves as a coordination point for ATP.

It belongs to the ATPase alpha/beta chains family. In terms of assembly, F-type ATPases have 2 components, CF(1) - the catalytic core - and CF(0) - the membrane proton channel. CF(1) has five subunits: alpha(3), beta(3), gamma(1), delta(1), epsilon(1). CF(0) has four main subunits: a(1), b(1), b'(1) and c(9-12).

It is found in the plastid. The protein resides in the chloroplast thylakoid membrane. It carries out the reaction ATP + H2O + 4 H(+)(in) = ADP + phosphate + 5 H(+)(out). In terms of biological role, produces ATP from ADP in the presence of a proton gradient across the membrane. The catalytic sites are hosted primarily by the beta subunits. This chain is ATP synthase subunit beta, chloroplastic, found in Ipomoea aquatica (Water spinach).